The sequence spans 591 residues: Aspartate--tRNA(Asp/Asn) ligase (591 aa).

Residue Glu-170 coordinates L-aspartate. Residues 194–197 form an aspartate region; that stretch reads QLFK. L-aspartate is bound at residue Arg-216. Residues 216-218 and Gln-225 contribute to the ATP site; that span reads RDE. His-448 contributes to the L-aspartate binding site. Glu-482 serves as a coordination point for ATP. Arg-489 is an L-aspartate binding site. 534 to 537 serves as a coordination point for ATP; it reads GWDR. Residues 559-591 are disordered; sequence GGVDPLTDAPAPITEQQRKESGIDVKPEPSKPH. The span at 574-591 shows a compositional bias: basic and acidic residues; it reads QQRKESGIDVKPEPSKPH.

This sequence belongs to the class-II aminoacyl-tRNA synthetase family. Type 1 subfamily. Homodimer.

It is found in the cytoplasm. It catalyses the reaction tRNA(Asx) + L-aspartate + ATP = L-aspartyl-tRNA(Asx) + AMP + diphosphate. Functionally, aspartyl-tRNA synthetase with relaxed tRNA specificity since it is able to aspartylate not only its cognate tRNA(Asp) but also tRNA(Asn). Reaction proceeds in two steps: L-aspartate is first activated by ATP to form Asp-AMP and then transferred to the acceptor end of tRNA(Asp/Asn). This Mycobacterium avium (strain 104) protein is Aspartate--tRNA(Asp/Asn) ligase.